A 315-amino-acid polypeptide reads, in one-letter code: Homoserine kinase (315 aa).

97–107 (PPARGLGSSAT) is a binding site for ATP.

The protein belongs to the GHMP kinase family. Homoserine kinase subfamily.

The protein resides in the cytoplasm. The catalysed reaction is L-homoserine + ATP = O-phospho-L-homoserine + ADP + H(+). It functions in the pathway amino-acid biosynthesis; L-threonine biosynthesis; L-threonine from L-aspartate: step 4/5. Catalyzes the ATP-dependent phosphorylation of L-homoserine to L-homoserine phosphate. In Prochlorococcus marinus (strain MIT 9215), this protein is Homoserine kinase.